The following is a 216-amino-acid chain: MATLTTRQQQIYDLIHQTIQRTGFPPTRAEIAAEFGFSSPNAAEEHLRALARKGVIELTPGASRGIRLRAEGGASPHQFSLPSMGLMQLTLPLVGRVAAGSPILAAEHIDRQYQVDPSLFSSRPDFLLKVRGMSMRDAGILDGDLLAVQRAAEAANGKIVVARLGDDVTVKRFQRKGRQVELIAENPDFEPIHVDLDRDEFQLEGLAVGLIRPAAP.

Positions 28–48 form a DNA-binding region, H-T-H motif; sequence RAEIAAEFGFSSPNAAEEHLR. Catalysis depends on for autocatalytic cleavage activity residues Ser-134 and Lys-171.

This sequence belongs to the peptidase S24 family. Homodimer.

It carries out the reaction Hydrolysis of Ala-|-Gly bond in repressor LexA.. Functionally, represses a number of genes involved in the response to DNA damage (SOS response), including recA and lexA. In the presence of single-stranded DNA, RecA interacts with LexA causing an autocatalytic cleavage which disrupts the DNA-binding part of LexA, leading to derepression of the SOS regulon and eventually DNA repair. The polypeptide is LexA repressor (Ralstonia nicotianae (strain ATCC BAA-1114 / GMI1000) (Ralstonia solanacearum)).